Consider the following 156-residue polypeptide: Small ribosomal subunit protein uS7 (156 aa).

It belongs to the universal ribosomal protein uS7 family. In terms of assembly, part of the 30S ribosomal subunit. Contacts proteins S9 and S11.

In terms of biological role, one of the primary rRNA binding proteins, it binds directly to 16S rRNA where it nucleates assembly of the head domain of the 30S subunit. Is located at the subunit interface close to the decoding center, probably blocks exit of the E-site tRNA. In Burkholderia multivorans (strain ATCC 17616 / 249), this protein is Small ribosomal subunit protein uS7.